A 163-amino-acid polypeptide reads, in one-letter code: Capsid protein (163 aa).

Residue Ala-2 is modified to N-acetylalanine; by host.

The protein belongs to the virgaviridae capsid protein family.

The protein resides in the virion. Capsid protein self-assembles to form rod-shaped virions about 18 nm in diameter with a central canal enclosing the viral genomic RNA. This Sunn-hemp mosaic virus (SHMV) protein is Capsid protein (CP).